The primary structure comprises 228 residues: Large ribosomal subunit protein uL1 (228 aa).

Belongs to the universal ribosomal protein uL1 family. As to quaternary structure, part of the 50S ribosomal subunit.

Its function is as follows. Binds directly to 23S rRNA. The L1 stalk is quite mobile in the ribosome, and is involved in E site tRNA release. Protein L1 is also a translational repressor protein, it controls the translation of the L11 operon by binding to its mRNA. The chain is Large ribosomal subunit protein uL1 from Clavibacter michiganensis subsp. michiganensis (strain NCPPB 382).